An 89-amino-acid polypeptide reads, in one-letter code: Acylphosphatase (89 aa).

An Acylphosphatase-like domain is found at 3-89 (RMTAWVHGFV…RGDLTGFVER (87 aa)). Residues Arg-18 and Asn-36 contribute to the active site.

The protein belongs to the acylphosphatase family.

It carries out the reaction an acyl phosphate + H2O = a carboxylate + phosphate + H(+). The protein is Acylphosphatase (acyP) of Rhodococcus jostii (strain RHA1).